The sequence spans 375 residues: Probable dipeptidase PepE (375 aa).

The next 2 helical transmembrane spans lie at 15–35 and 55–75; these read LALA…ITPG and LVLP…LAAL. Mn(2+) contacts are provided by aspartate 230, aspartate 242, histidine 306, glutamate 335, and glutamate 349.

Belongs to the peptidase M24B family. The cofactor is Mn(2+).

The protein localises to the cell membrane. This Mycobacterium bovis (strain ATCC BAA-935 / AF2122/97) protein is Probable dipeptidase PepE (pepE).